Consider the following 523-residue polypeptide: Synaptotagmin-10 (523 aa).

Over 1–55 (MSFHKEDGVNSLCQKALHIVTELCFAGQVEWEKCSGIFPRDRGSQGGSSTDISVS) the chain is Vesicular. Residues 13-35 (CQKALHIVTELCFAGQVEWEKCS) are cysteine motif. Residues 56–76 (LLAVVVSFCGLALLVVSLFVF) traverse the membrane as a helical segment. Topologically, residues 77-523 (WKLCWPCWKS…CPSPKPPSTP (447 aa)) are cytoplasmic. The residue at position 136 (T136) is a Phosphothreonine. 2 consecutive C2 domains span residues 231–352 (ICGK…TVWK) and 363–496 (DLGE…THWH). Ca(2+) contacts are provided by D262, D268, D320, F321, D322, S325, D328, D394, D400, D454, and D456.

The protein belongs to the synaptotagmin family. In terms of assembly, homodimer; disulfide-linked via the cysteine motif. Can also form heterodimers with SYT3, SYT6, SYT7 and SYT9. The cofactor is Ca(2+).

Its subcellular location is the cytoplasmic vesicle. The protein resides in the secretory vesicle membrane. In terms of biological role, ca(2+) sensor specifically required for the Ca(2+)-dependent exocytosis of secretory vesicles containing IGF1 in neurons of the olfactory bulb. Exocytosis of IGF1 is required for sensory perception of smell. Not involved in Ca(2+)-dependent synaptic vesicle exocytosis. Acts through Ca(2+) and phospholipid binding to the C2 domain: Ca(2+) induces binding of the C2-domains to phospholipid membranes and to assembled SNARE-complexes; both actions contribute to triggering exocytosis. This chain is Synaptotagmin-10 (SYT10), found in Pongo abelii (Sumatran orangutan).